Here is a 292-residue protein sequence, read N- to C-terminus: 4-hydroxy-tetrahydrodipicolinate synthase (292 aa).

Threonine 44 is a binding site for pyruvate. Tyrosine 132 acts as the Proton donor/acceptor in catalysis. Lysine 161 functions as the Schiff-base intermediate with substrate in the catalytic mechanism. Pyruvate is bound at residue isoleucine 203.

It belongs to the DapA family. In terms of assembly, homotetramer; dimer of dimers.

The protein resides in the cytoplasm. It carries out the reaction L-aspartate 4-semialdehyde + pyruvate = (2S,4S)-4-hydroxy-2,3,4,5-tetrahydrodipicolinate + H2O + H(+). Its pathway is amino-acid biosynthesis; L-lysine biosynthesis via DAP pathway; (S)-tetrahydrodipicolinate from L-aspartate: step 3/4. Functionally, catalyzes the condensation of (S)-aspartate-beta-semialdehyde [(S)-ASA] and pyruvate to 4-hydroxy-tetrahydrodipicolinate (HTPA). The polypeptide is 4-hydroxy-tetrahydrodipicolinate synthase (Fervidobacterium nodosum (strain ATCC 35602 / DSM 5306 / Rt17-B1)).